Here is a 512-residue protein sequence, read N- to C-terminus: CaM kinase-like vesicle-associated protein (512 aa).

A Protein kinase domain is found at 24–286 (YDLGQVIKTE…AEEAISHEWI (263 aa)). The segment at 328-347 (APEQSGTAATQSASDAATPG) is disordered. Low complexity predominate over residues 332-347 (SGTAATQSASDAATPG). Ser392 carries the post-translational modification Phosphoserine. The tract at residues 393 to 512 (ADRSATPATD…AQESQRVETS (120 aa)) is disordered. Over residues 398–439 (TPATDGSATPATDGSVTPATDGSITPATDGSVTPATDRSATP) the composition is skewed to polar residues. Thr446 is modified (phosphothreonine). Residues 449–460 (TEESTVPATQSS) are compositionally biased toward polar residues. Residues 461 to 478 (ALPAAKAAATPEPAVAQP) are compositionally biased toward low complexity. Position 470 is a phosphothreonine (Thr470).

It belongs to the protein kinase superfamily. CAMK Ser/Thr protein kinase family. In terms of assembly, interacts with calmodulin, in the presence of calcium. Ca(2+) is required as a cofactor.

The protein resides in the cell membrane. It localises to the cytoplasmic vesicle membrane. Functionally, does not appear to have detectable kinase activity. The sequence is that of CaM kinase-like vesicle-associated protein (Camkv) from Mus musculus (Mouse).